We begin with the raw amino-acid sequence, 81 residues long: Mipartoxin-2 (81 aa).

Positions 1–21 are cleaved as a signal peptide; that stretch reads MKTLLLTLVVVTIVCLDLGNS. 4 cysteine pairs are disulfide-bonded: cysteine 24-cysteine 42, cysteine 35-cysteine 61, cysteine 65-cysteine 73, and cysteine 74-cysteine 79.

It belongs to the three-finger toxin family. Short-chain subfamily. In terms of tissue distribution, expressed by the venom gland.

The protein localises to the secreted. Snake venom neurotoxin that blocks neuromuscular transmission, presenting a postsynaptic action through the nicotinic acetylcholine receptor (nAChR). Has no cytotoxic activity. The sequence is that of Mipartoxin-2 from Micrurus mipartitus (Red-tailed coral snake).